A 631-amino-acid polypeptide reads, in one-letter code: Glutamyl-tRNA(Gln) amidotransferase subunit E (631 aa).

This sequence belongs to the GatB/GatE family. GatE subfamily. As to quaternary structure, heterodimer of GatD and GatE.

The catalysed reaction is L-glutamyl-tRNA(Gln) + L-glutamine + ATP + H2O = L-glutaminyl-tRNA(Gln) + L-glutamate + ADP + phosphate + H(+). In terms of biological role, allows the formation of correctly charged Gln-tRNA(Gln) through the transamidation of misacylated Glu-tRNA(Gln) in organisms which lack glutaminyl-tRNA synthetase. The reaction takes place in the presence of glutamine and ATP through an activated gamma-phospho-Glu-tRNA(Gln). The GatDE system is specific for glutamate and does not act on aspartate. This is Glutamyl-tRNA(Gln) amidotransferase subunit E from Methanococcus maripaludis (strain DSM 14266 / JCM 13030 / NBRC 101832 / S2 / LL).